We begin with the raw amino-acid sequence, 204 residues long: Adenylyl-sulfate kinase (204 aa).

34–41 (GLSGSGKS) provides a ligand contact to ATP. Serine 108 acts as the Phosphoserine intermediate in catalysis.

This sequence belongs to the APS kinase family.

It carries out the reaction adenosine 5'-phosphosulfate + ATP = 3'-phosphoadenylyl sulfate + ADP + H(+). Its pathway is sulfur metabolism; hydrogen sulfide biosynthesis; sulfite from sulfate: step 2/3. Catalyzes the synthesis of activated sulfate. This chain is Adenylyl-sulfate kinase, found in Phocaeicola vulgatus (strain ATCC 8482 / DSM 1447 / JCM 5826 / CCUG 4940 / NBRC 14291 / NCTC 11154) (Bacteroides vulgatus).